A 681-amino-acid chain; its full sequence is Envelope glycoprotein (681 aa).

The N-terminal stretch at methionine 1–threonine 18 is a signal peptide. The Extracellular portion of the chain corresponds to leucine 19 to aspartate 648. Residues serine 38–histidine 188 are receptor-binding. Residues asparagine 94, asparagine 171, asparagine 190, asparagine 202, asparagine 207, asparagine 219, asparagine 223, and asparagine 255 are each glycosylated (N-linked (GlcNAc...) asparagine; by host). The interval lysine 222–threonine 424 is disordered. Polar residues-rich tracts occupy residues leucine 244–proline 259, proline 278–leucine 290, and glycine 308–proline 331. Residues glutamate 277 to proline 455 form a mucin-like region region. Asparagine 310, asparagine 313, asparagine 326, asparagine 337, asparagine 344, asparagine 345, asparagine 350, asparagine 360, asparagine 397, asparagine 408, asparagine 422, and asparagine 487 each carry an N-linked (GlcNAc...) asparagine; by host glycan. Residues asparagine 337–serine 347 show a composition bias toward low complexity. Residues lysine 348–glutamate 388 are compositionally biased toward polar residues. Residues asparagine 389–threonine 424 are compositionally biased toward low complexity. Positions glycine 529–isoleucine 549 are fusion peptide. N-linked (GlcNAc...) asparagine; by host glycosylation is found at asparagine 564 and asparagine 619. A helical transmembrane segment spans residues tryptophan 649 to leucine 669. Residues serine 670–glycine 681 lie on the Cytoplasmic side of the membrane. 2 S-palmitoyl cysteine; by host lipidation sites follow: cysteine 671 and cysteine 673.

Belongs to the filoviruses glycoprotein family. Homotrimer; each monomer consists of a GP1 and a GP2 subunit linked by disulfide bonds. The resulting peplomers (GP1,2) protrude from the virus surface as spikes. GP1,2 interacts with human CD209 and CLEC4M (collectively referred to as DC-SIGN(R)). Asialoglycoprotein receptor (ASGP-R) may be a liver-specific receptor for GP1,2. Members of the Tyro3 receptor tyrosine kinase family may be cell entry factors interacting with GP1,2. N-glycosylated. Post-translationally, O-glycosylated in the mucin-like region. In terms of processing, specific enzymatic cleavages in vivo yield mature proteins. The precursor is processed into GP1 and GP2 by host cell furin in the trans Golgi, and maybe by other host proteases, to yield the mature GP1 and GP2 proteins. The cleavage site corresponds to the furin optimal cleavage sequence [KR]-X-[KR]-R. GP1 is phosphorylated on serine residues between residues 260 and 273.

It localises to the virion membrane. It is found in the host cell membrane. GP1 is responsible for binding to the receptor(s) on target cells. Interacts with CD209/DC-SIGN and CLEC4M/DC-SIGNR which act as cofactors for virus entry into the host cell. Binding to CD209 and CLEC4M, which are respectively found on dendritic cells (DCs), and on endothelial cells of liver sinusoids and lymph node sinuses, facilitate infection of macrophages and endothelial cells. These interactions not only facilitate virus cell entry, but also allow capture of viral particles by DCs and subsequent transmission to susceptible cells without DCs infection (trans infection). Functionally, GP2 acts as a class I viral fusion protein. Under the current model, the protein has at least 3 conformational states: pre-fusion native state, pre-hairpin intermediate state, and post-fusion hairpin state. During viral and target cell membrane fusion, the coiled coil regions (heptad repeats) assume a trimer-of-hairpins structure, positioning the fusion peptide in close proximity to the C-terminal region of the ectodomain. The formation of this structure appears to drive apposition and subsequent fusion of viral and target cell membranes. Responsible for penetration of the virus into the cell cytoplasm by mediating the fusion of the membrane of the endocytosed virus particle with the endosomal membrane. Low pH in endosomes induces an irreversible conformational change in GP2, releasing the fusion hydrophobic peptide. The protein is Envelope glycoprotein (GP) of Chlorocebus aethiops (Green monkey).